A 33-amino-acid chain; its full sequence is uncharacterized protein (33 aa).

The interval methionine 1 to leucine 33 is disordered.

This is an uncharacterized protein from Caenorhabditis elegans.